Here is a 26-residue protein sequence, read N- to C-terminus: Conotoxin Eb6.17 (26 aa).

Intrachain disulfides connect Cys-7–Cys-18 and Cys-13–Cys-25.

This sequence belongs to the conotoxin O1 superfamily. In terms of tissue distribution, expressed by the venom duct.

It is found in the secreted. This is Conotoxin Eb6.17 (E1) from Conus ebraeus (Hebrew cone).